A 636-amino-acid chain; its full sequence is Threonine--tRNA ligase (636 aa).

In terms of domain architecture, TGS spans 1–63 (MPMITITLPD…EHDASLRIIT (63 aa)). The catalytic stretch occupies residues 245–536 (DHRKIGKAQD…LIEHHAGAFP (292 aa)). The Zn(2+) site is built by Cys-336, His-387, and His-513.

Belongs to the class-II aminoacyl-tRNA synthetase family. Homodimer. It depends on Zn(2+) as a cofactor.

The protein localises to the cytoplasm. It carries out the reaction tRNA(Thr) + L-threonine + ATP = L-threonyl-tRNA(Thr) + AMP + diphosphate + H(+). Functionally, catalyzes the attachment of threonine to tRNA(Thr) in a two-step reaction: L-threonine is first activated by ATP to form Thr-AMP and then transferred to the acceptor end of tRNA(Thr). Also edits incorrectly charged L-seryl-tRNA(Thr). This Xanthomonas campestris pv. campestris (strain 8004) protein is Threonine--tRNA ligase.